The chain runs to 182 residues: Dynactin subunit 5 (182 aa).

N-acetylmethionine is present on Met1.

It belongs to the dynactin subunits 5/6 family. Dynactin subunit 5 subfamily. In terms of assembly, subunit of dynactin, a multiprotein complex part of a tripartite complex with dynein and a adapter, such as BICDL1, BICD2 or HOOK3. The dynactin complex is built around ACTR1A/ACTB filament and consists of an actin-related filament composed of a shoulder domain, a pointed end and a barbed end. Its length is defined by its flexible shoulder domain. The soulder is composed of 2 DCTN1 subunits, 4 DCTN2 and 2 DCTN3. The 4 DCNT2 (via N-terminus) bind the ACTR1A filament and act as molecular rulers to determine the length. The pointed end is important for binding dynein-dynactin cargo adapters. Consists of 4 subunits: ACTR10, DCNT4, DCTN5 and DCTN6. Within the complex DCTN6 forms a heterodimer with DCTN5. The barbed end is composed of a CAPZA1:CAPZB heterodimers, which binds ACTR1A/ACTB filament and dynactin and stabilizes dynactin. Interacts with N4BP2L1.

The protein resides in the cytoplasm. Its subcellular location is the cytoskeleton. The protein localises to the chromosome. It is found in the centromere. It localises to the kinetochore. Functionally, part of the dynactin complex that activates the molecular motor dynein for ultra-processive transport along microtubules. The polypeptide is Dynactin subunit 5 (DCTN5) (Pongo abelii (Sumatran orangutan)).